A 122-amino-acid polypeptide reads, in one-letter code: Large ribosomal subunit protein bL12 (122 aa).

The protein belongs to the bacterial ribosomal protein bL12 family. As to quaternary structure, homodimer. Part of the ribosomal stalk of the 50S ribosomal subunit. Forms a multimeric L10(L12)X complex, where L10 forms an elongated spine to which 2 to 4 L12 dimers bind in a sequential fashion. Binds GTP-bound translation factors.

In terms of biological role, forms part of the ribosomal stalk which helps the ribosome interact with GTP-bound translation factors. Is thus essential for accurate translation. In Histophilus somni (strain 129Pt) (Haemophilus somnus), this protein is Large ribosomal subunit protein bL12.